The sequence spans 346 residues: Flap endonuclease 1 (346 aa).

The N-domain stretch occupies residues 1-100; that stretch reads MGVDIKELVE…KELERRYQIK (100 aa). 7 residues coordinate Mg(2+): Asp29, Asp82, Glu154, Glu156, Asp175, Asp177, and Asp238. The segment at 118–260 is I-domain; the sequence is EARIYAQQTS…KALKLVKELK (143 aa). The segment at 336–344 is interaction with PCNA; it reads KQQSLESWF.

This sequence belongs to the XPG/RAD2 endonuclease family. FEN1 subfamily. In terms of assembly, interacts with PCNA. PCNA stimulates the nuclease activity without altering cleavage specificity. Requires Mg(2+) as cofactor.

Structure-specific nuclease with 5'-flap endonuclease and 5'-3' exonuclease activities involved in DNA replication and repair. During DNA replication, cleaves the 5'-overhanging flap structure that is generated by displacement synthesis when DNA polymerase encounters the 5'-end of a downstream Okazaki fragment. Binds the unpaired 3'-DNA end and kinks the DNA to facilitate 5' cleavage specificity. Cleaves one nucleotide into the double-stranded DNA from the junction in flap DNA, leaving a nick for ligation. Also involved in the base excision repair (BER) pathway. Acts as a genome stabilization factor that prevents flaps from equilibrating into structures that lead to duplications and deletions. Also possesses 5'-3' exonuclease activity on nicked or gapped double-stranded DNA. This Thermofilum pendens (strain DSM 2475 / Hrk 5) protein is Flap endonuclease 1.